Reading from the N-terminus, the 361-residue chain is Phospho-N-acetylmuramoyl-pentapeptide-transferase (361 aa).

10 consecutive transmembrane segments (helical) span residues 21 to 41, 69 to 89, 93 to 113, 131 to 151, 168 to 188, 200 to 220, 240 to 260, 264 to 284, 289 to 309, and 338 to 358; these read YLTIRALLAMLSALFIGLMLG, VGTPTMGGILILFAFIVSILI, WSNIYLWIIIVTSIIFSAIGF, SIKFLTQSLSAIVISTWIILI, IILPLSVFDFLILSYFVIVGS, GLAIMSVILISGALAIFAYFS, LFIICAALIGSSLGFLWFNAY, IFMGDVGSLSLGAILAVIAIL, ILLFIMGGVFVAETLSVIIQV, and KIIVRFWIVTLILVLIGLASI.

Belongs to the glycosyltransferase 4 family. MraY subfamily. Mg(2+) serves as cofactor.

The protein localises to the cell inner membrane. It catalyses the reaction UDP-N-acetyl-alpha-D-muramoyl-L-alanyl-gamma-D-glutamyl-meso-2,6-diaminopimeloyl-D-alanyl-D-alanine + di-trans,octa-cis-undecaprenyl phosphate = di-trans,octa-cis-undecaprenyl diphospho-N-acetyl-alpha-D-muramoyl-L-alanyl-D-glutamyl-meso-2,6-diaminopimeloyl-D-alanyl-D-alanine + UMP. Its pathway is cell wall biogenesis; peptidoglycan biosynthesis. Functionally, catalyzes the initial step of the lipid cycle reactions in the biosynthesis of the cell wall peptidoglycan: transfers peptidoglycan precursor phospho-MurNAc-pentapeptide from UDP-MurNAc-pentapeptide onto the lipid carrier undecaprenyl phosphate, yielding undecaprenyl-pyrophosphoryl-MurNAc-pentapeptide, known as lipid I. The sequence is that of Phospho-N-acetylmuramoyl-pentapeptide-transferase from Vesicomyosocius okutanii subsp. Calyptogena okutanii (strain HA).